The primary structure comprises 314 residues: Peroxisome biogenesis factor 10 (314 aa).

The Peroxisomal matrix portion of the chain corresponds to 1-7 (MNTYVAE). Residues 8–37 (IGEIVRSQRRDEEYIEDITERLSRVSKELL) traverse the membrane as a helical segment. A topological domain (cytoplasmic) is located at residue Gly38. A helical transmembrane segment spans residues 39 to 60 (QRTWIRWFPYLKSIASTLYYTS). The Peroxisomal matrix portion of the chain corresponds to 61–90 (TVVLGNQTLGEEYVHLFESNGLERTVPSIP). A helical transmembrane segment spans residues 91–110 (SRISFVLLHSAFPLISNYLI). Residues 111 to 142 (QKAESTLTHPSTESFLGIPIRKNQKARQSFLD) lie on the Cytoplasmic side of the membrane. A helical membrane pass occupies residues 143–166 (VFFWLRTKLFPQLQRAHIALFYIT). Residues 167–197 (GAYYSIARRFTGIRFLSASAHSDIPALKVYR) lie on the Peroxisomal matrix side of the membrane. The helical transmembrane segment at 198–218 (FLGYITLIQLAVSIGISLYSF) threads the bilayer. The Cytoplasmic portion of the chain corresponds to 219–314 (LEQEKFNNKL…PRDVTPLLNL (96 aa)). Residues Cys255, Cys258, Cys269, His271, Cys274, Cys277, Cys296, and Cys299 each coordinate Zn(2+). The RING-type zinc finger occupies 255–300 (CSICLENKNPSALFCGHLFCWTCIQEHAVAATSSASTSSARCPQCR).

Belongs to the pex2/pex10/pex12 family. Component of the PEX2-PEX10-PEX12 retrotranslocation channel.

The protein resides in the peroxisome membrane. The catalysed reaction is S-ubiquitinyl-[E2 ubiquitin-conjugating enzyme]-L-cysteine + [acceptor protein]-L-lysine = [E2 ubiquitin-conjugating enzyme]-L-cysteine + N(6)-ubiquitinyl-[acceptor protein]-L-lysine.. It functions in the pathway protein modification; protein ubiquitination. With respect to regulation, the E3 ubiquitin-protein ligase activity is stimulated by PEX12/prx-12. Functionally, E3 ubiquitin-protein ligase component of a retrotranslocation channel required for peroxisome organization by mediating export of the PEX5/prx-5 receptor from peroxisomes to the cytosol, thereby promoting PEX5/prx-5 recycling. The retrotranslocation channel is composed of PEX2/prx-2, PEX10/prx-10 and PEX12/prx-12; each subunit contributing transmembrane segments that coassemble into an open channel that specifically allows the passage of PEX5/prx-5 through the peroxisomal membrane. PEX10/prx-10 also regulates PEX5 recycling by acting as a E3 ubiquitin-protein ligase. When PEX5/prx-5 recycling is compromised, PEX10/prx-10 catalyzes polyubiquitination of PEX5/prx-5 during its passage through the retrotranslocation channel, leading to its degradation. The polypeptide is Peroxisome biogenesis factor 10 (Caenorhabditis elegans).